A 346-amino-acid polypeptide reads, in one-letter code: Quinolinate synthase (346 aa).

2 residues coordinate iminosuccinate: histidine 47 and serine 68. Residue cysteine 113 coordinates [4Fe-4S] cluster. Residues 139 to 141 and serine 156 each bind iminosuccinate; that span reads YAN. Cysteine 200 provides a ligand contact to [4Fe-4S] cluster. Iminosuccinate is bound by residues 226 to 228 and threonine 243; that span reads HPE. Cysteine 297 is a [4Fe-4S] cluster binding site.

The protein belongs to the quinolinate synthase family. Type 1 subfamily. [4Fe-4S] cluster serves as cofactor.

It localises to the cytoplasm. The enzyme catalyses iminosuccinate + dihydroxyacetone phosphate = quinolinate + phosphate + 2 H2O + H(+). Its pathway is cofactor biosynthesis; NAD(+) biosynthesis; quinolinate from iminoaspartate: step 1/1. Catalyzes the condensation of iminoaspartate with dihydroxyacetone phosphate to form quinolinate. This is Quinolinate synthase from Photorhabdus laumondii subsp. laumondii (strain DSM 15139 / CIP 105565 / TT01) (Photorhabdus luminescens subsp. laumondii).